The primary structure comprises 222 residues: UPF0173 metal-dependent hydrolase Kcr_0055 (222 aa).

The protein belongs to the UPF0173 family.

The sequence is that of UPF0173 metal-dependent hydrolase Kcr_0055 from Korarchaeum cryptofilum (strain OPF8).